The sequence spans 435 residues: Glutamyl-tRNA reductase (435 aa).

Substrate is bound by residues Thr-50–Arg-53, Ser-110, Glu-115–Gln-117, and Gln-121. Cys-51 serves as the catalytic Nucleophile. Gly-191–Gly-196 lines the NADP(+) pocket.

This sequence belongs to the glutamyl-tRNA reductase family. In terms of assembly, homodimer.

It catalyses the reaction (S)-4-amino-5-oxopentanoate + tRNA(Glu) + NADP(+) = L-glutamyl-tRNA(Glu) + NADPH + H(+). It functions in the pathway porphyrin-containing compound metabolism; protoporphyrin-IX biosynthesis; 5-aminolevulinate from L-glutamyl-tRNA(Glu): step 1/2. In terms of biological role, catalyzes the NADPH-dependent reduction of glutamyl-tRNA(Glu) to glutamate 1-semialdehyde (GSA). The sequence is that of Glutamyl-tRNA reductase from Sulfurovum sp. (strain NBC37-1).